Reading from the N-terminus, the 258-residue chain is Thyroxine 5-deiodinase (258 aa).

The chain crosses the membrane as a helical; Signal-anchor for type II membrane protein span at residues 1–20 (AACILLFPRFLLTAVMLWLL). Residues 21 to 258 (DFLCIRKKML…QSPGAVVIQV (238 aa)) are Extracellular-facing. Sec122 is a catalytic residue. A non-standard amino acid (selenocysteine) is located at residue Sec122.

It belongs to the iodothyronine deiodinase family. As to quaternary structure, monomer. Homodimer. May undergo minor heretodimerization with DIO1 and DIO2.

It localises to the cell membrane. The protein resides in the endosome membrane. The catalysed reaction is 3,3',5'-triiodo-L-thyronine + iodide + A + H(+) = L-thyroxine + AH2. It carries out the reaction 3,3'-diiodo-L-thyronine + iodide + A + H(+) = 3,3',5-triiodo-L-thyronine + AH2. It catalyses the reaction 3-iodo-L-thyronine + iodide + A + H(+) = 3,5-diiodo-L-thyronine + AH2. The enzyme catalyses L-thyronine + iodide + A + H(+) = 3-iodo-L-thyronine + AH2. The catalysed reaction is 3',5'-diiodo-L-thyronine + iodide + A + H(+) = 3,3',5'-triiodo-L-thyronine + AH2. It carries out the reaction 3'-iodo-L-thyronine + iodide + A + H(+) = 3,3'-diiodo-L-thyronine + AH2. It catalyses the reaction 3,3',5'-triiodothyronamine + iodide + A + H(+) = 3,3',5,5'-tetraiodothyronamine + AH2. The enzyme catalyses 3',5'-diiodothyronamine + iodide + A + H(+) = 3,3',5'-triiodothyronamine + AH2. The catalysed reaction is 3,3'-diiodothyronamine + iodide + A + H(+) = 3,3',5-triiodothyronamine + AH2. It carries out the reaction 3-iodothyronamine + iodide + A + H(+) = 3,5-diiodothyronamine + AH2. It catalyses the reaction 3'-iodothyronamine + iodide + A + H(+) = 3,3'-diiodothyronamine + AH2. The enzyme catalyses thyronamine + iodide + A + H(+) = 3-iodothyronamine + AH2. In terms of biological role, plays a crucial role in the metabolism of thyroid hormones (TH) and has specific roles in TH activation and inactivation by deiodination. Catalyzes the deiodination of L-thyroxine (T4) to 3,3',5'-triiodothyronine (rT3) and 3,5,3'-triiodothyronine (T3) to 3,3'-diiodothyronine (3,3'-T2) via inner-ring deiodination (IRD). Catalyzes the deiodination of rT3 to 3',5'-diiodothyronine (3',5'-T2), 3,3'-T2 to 3'-monoiodothyronine (3'-T1) and 3,5-diiodothyronine (3,5-T2) to 3-monoiodothyronine (3-T1) via IRD. Catalyzes the deiodination of 3-T1 to L-thyronine (T0) via outer-ring deiodination (ORD). Catalyzes the tyrosyl ring deiodinations of 3,3',5,5'-tetraiodothyronamine, 3,3',5'-triiodothyronamine, 3,5,3'-triiodothyronamine, 3,5-diiodothyronamine, 3,3'-diiodothyronamine and 3-iodothyronamine. This is Thyroxine 5-deiodinase (DIO3) from Gallus gallus (Chicken).